The primary structure comprises 603 residues: Aspartate--tRNA(Asp/Asn) ligase (603 aa).

Glutamate 172 is an L-aspartate binding site. The aspartate stretch occupies residues 196–199; the sequence is QLFK. An L-aspartate-binding site is contributed by arginine 218. ATP-binding positions include 218–220 and glutamine 227; that span reads RDE. Histidine 457 is a binding site for L-aspartate. Glutamate 491 provides a ligand contact to ATP. Arginine 498 provides a ligand contact to L-aspartate. 543–546 is an ATP binding site; that stretch reads GLDR.

It belongs to the class-II aminoacyl-tRNA synthetase family. Type 1 subfamily. In terms of assembly, homodimer.

It localises to the cytoplasm. The catalysed reaction is tRNA(Asx) + L-aspartate + ATP = L-aspartyl-tRNA(Asx) + AMP + diphosphate. Aspartyl-tRNA synthetase with relaxed tRNA specificity since it is able to aspartylate not only its cognate tRNA(Asp) but also tRNA(Asn). Reaction proceeds in two steps: L-aspartate is first activated by ATP to form Asp-AMP and then transferred to the acceptor end of tRNA(Asp/Asn). The chain is Aspartate--tRNA(Asp/Asn) ligase from Laribacter hongkongensis (strain HLHK9).